Here is a 161-residue protein sequence, read N- to C-terminus: MTHWTIVLATEAVEKTAEGGLFDFDATLPVMAIQFLVLAALLNKLFYKPIGQAIDDRSDYIRTNLVDAKERQQKAEDLAAQYEQELRDVRREAQDVIAKAQAEAQKVVADEVKSAQAEALAEREKAALEIEAQRESAFKSLEQQVDSLSQAIASKLVGAKL.

Residues 30 to 47 (VMAIQFLVLAALLNKLFY) form a helical membrane-spanning segment.

The protein belongs to the ATPase B chain family. As to quaternary structure, F-type ATPases have 2 components, F(1) - the catalytic core - and F(0) - the membrane proton channel. F(1) has five subunits: alpha(3), beta(3), gamma(1), delta(1), epsilon(1). F(0) has four main subunits: a(1), b(1), b'(1) and c(10-14). The alpha and beta chains form an alternating ring which encloses part of the gamma chain. F(1) is attached to F(0) by a central stalk formed by the gamma and epsilon chains, while a peripheral stalk is formed by the delta, b and b' chains.

It is found in the cellular thylakoid membrane. F(1)F(0) ATP synthase produces ATP from ADP in the presence of a proton or sodium gradient. F-type ATPases consist of two structural domains, F(1) containing the extramembraneous catalytic core and F(0) containing the membrane proton channel, linked together by a central stalk and a peripheral stalk. During catalysis, ATP synthesis in the catalytic domain of F(1) is coupled via a rotary mechanism of the central stalk subunits to proton translocation. In terms of biological role, component of the F(0) channel, it forms part of the peripheral stalk, linking F(1) to F(0). The b'-subunit is a diverged and duplicated form of b found in plants and photosynthetic bacteria. The protein is ATP synthase subunit b' of Picosynechococcus sp. (strain ATCC 27264 / PCC 7002 / PR-6) (Agmenellum quadruplicatum).